The following is a 437-amino-acid chain: Argininosuccinate lyase (437 aa).

The protein belongs to the lyase 1 family. Argininosuccinate lyase subfamily.

It is found in the cytoplasm. It catalyses the reaction 2-(N(omega)-L-arginino)succinate = fumarate + L-arginine. It functions in the pathway amino-acid biosynthesis; L-arginine biosynthesis; L-arginine from L-ornithine and carbamoyl phosphate: step 3/3. This chain is Argininosuccinate lyase, found in Clostridium novyi (strain NT).